A 417-amino-acid polypeptide reads, in one-letter code: MADIKNYTLNFGPQHPAAHGVLRLVLELDGEVIQRADPHIGLLHRATEKLAEQKTWIQSVPYMDRLDYVSMMVNEHAYVMAIERLLGLEVPVRAQYIRVMFDEITRLLNHLMWIGSHALDVGAMAVFLYAFREREDMFDMYEAVSGARMHAAYYRPGGVYRDLPDTMPQYRASKVHNERAIKAMNEARSGSLLDFIEDFTNRFPKYVDEYETLLTDNRIWKQRLVDIGVVSPERALQMGFTGPMLRGSGIAWDLRKKQPYEVYDKLDFDVPVGVGGDCYARYLVRVEEMRQSNRIIKQCVDWLRRNPGPVITENHKVAPPSRVDMKSNMEELIHHFKLFTEGIHVPEGEAYAAVEHPKGEFGIYAISDGANKPYRLKIRAPGFAHLAALDEMAKGHMIADAVTIIGTQDIVFGEIDR.

It belongs to the complex I 49 kDa subunit family. NDH-1 is composed of 14 different subunits. Subunits NuoB, C, D, E, F, and G constitute the peripheral sector of the complex.

The protein localises to the cell inner membrane. It catalyses the reaction a quinone + NADH + 5 H(+)(in) = a quinol + NAD(+) + 4 H(+)(out). Functionally, NDH-1 shuttles electrons from NADH, via FMN and iron-sulfur (Fe-S) centers, to quinones in the respiratory chain. The immediate electron acceptor for the enzyme in this species is believed to be ubiquinone. Couples the redox reaction to proton translocation (for every two electrons transferred, four hydrogen ions are translocated across the cytoplasmic membrane), and thus conserves the redox energy in a proton gradient. The polypeptide is NADH-quinone oxidoreductase subunit D (Cupriavidus taiwanensis (strain DSM 17343 / BCRC 17206 / CCUG 44338 / CIP 107171 / LMG 19424 / R1) (Ralstonia taiwanensis (strain LMG 19424))).